The following is a 173-amino-acid chain: Small ribosomal subunit protein uS5 (173 aa).

Residues 17 to 80 (WQERVIQIRR…ADGKKQLIDV (64 aa)) form the S5 DRBM domain.

It belongs to the universal ribosomal protein uS5 family. As to quaternary structure, part of the 30S ribosomal subunit. Contacts proteins S4 and S8.

With S4 and S12 plays an important role in translational accuracy. Its function is as follows. Located at the back of the 30S subunit body where it stabilizes the conformation of the head with respect to the body. In Crocosphaera subtropica (strain ATCC 51142 / BH68) (Cyanothece sp. (strain ATCC 51142)), this protein is Small ribosomal subunit protein uS5.